The chain runs to 149 residues: MSLEKDIESFVKSLDLELYEISVARDGDDSIYRVNVLSTQIEDGKKKGVSLDECVHLSRLISPLLDVTPPMSGEYRLEVGTPGIERKVSTLKQFVLSIGERVALTLKSKEKLKGLLLRVEESNIYLDVDAEEVCVEFAQISKAKTYFEW.

Belongs to the RimP family.

Its subcellular location is the cytoplasm. Required for maturation of 30S ribosomal subunits. The sequence is that of Ribosome maturation factor RimP from Sulfurimonas denitrificans (strain ATCC 33889 / DSM 1251) (Thiomicrospira denitrificans (strain ATCC 33889 / DSM 1251)).